The sequence spans 317 residues: UV DNA damage endonuclease (317 aa).

The protein belongs to the uve1/UvsE family.

In terms of biological role, component in a DNA repair pathway. Removal of UV LIGHT damaged nucleotides. Recognizes pyrimidine dimers and cleave a phosphodiester bond immediately 5' to the lesion. The chain is UV DNA damage endonuclease from Bacillus thuringiensis subsp. konkukian (strain 97-27).